Reading from the N-terminus, the 303-residue chain is UDP-3-O-acyl-N-acetylglucosamine deacetylase (303 aa).

Histidine 79, histidine 238, and aspartate 242 together coordinate Zn(2+). Histidine 265 acts as the Proton donor in catalysis.

Belongs to the LpxC family. It depends on Zn(2+) as a cofactor.

It catalyses the reaction a UDP-3-O-[(3R)-3-hydroxyacyl]-N-acetyl-alpha-D-glucosamine + H2O = a UDP-3-O-[(3R)-3-hydroxyacyl]-alpha-D-glucosamine + acetate. It functions in the pathway glycolipid biosynthesis; lipid IV(A) biosynthesis; lipid IV(A) from (3R)-3-hydroxytetradecanoyl-[acyl-carrier-protein] and UDP-N-acetyl-alpha-D-glucosamine: step 2/6. In terms of biological role, catalyzes the hydrolysis of UDP-3-O-myristoyl-N-acetylglucosamine to form UDP-3-O-myristoylglucosamine and acetate, the committed step in lipid A biosynthesis. The protein is UDP-3-O-acyl-N-acetylglucosamine deacetylase of Pseudoalteromonas translucida (strain TAC 125).